A 702-amino-acid chain; its full sequence is ATP-dependent RNA helicase DDX4 (702 aa).

Positions 22–228 are disordered; that stretch reads FEKDKYSSGA…YIPPPPPEDE (207 aa). Residues 29 to 46 show a composition bias toward polar residues; the sequence is SGANGDTFNRTSASSDIG. 2 stretches are compositionally biased toward gly residues: residues 58-68 and 125-137; these read GGFGRGKGFGN and RGSF…GFGL. Composition is skewed to polar residues over residues 141–150 and 195–215; these read NSESDQDQGT and SGKN…SQGP. A phosphoserine mark is found at Ser-195 and Ser-199. Positions 201–220 are interaction with RANBP9; the sequence is KSETEGGESSDSQGPKVTYI. Residues 261 to 289 carry the Q motif motif; sequence LTFEEANLCQTLNNNIAKAGYTKLTPVQK. The Helicase ATP-binding domain maps to 292-475; it reads IPIVLAGRDL…GDFLKSSYLF (184 aa). 305–312 contributes to the ATP binding site; it reads AQTGSGKT. The DEAD box signature appears at 419 to 422; sequence DEAD. Residues 503-648 enclose the Helicase C-terminal domain; that stretch reads KLVEILRNIG…DVPAWLEEIA (146 aa). Residues 681-693 are compositionally biased toward polar residues; that stretch reads TLNTAGISSSQAP. Residues 681–702 are disordered; it reads TLNTAGISSSQAPNPVDDESWD. Position 700 is a phosphoserine (Ser-700).

This sequence belongs to the DEAD box helicase family. DDX4/VASA subfamily. In terms of assembly, found in a mRNP complex, at least composed of TDRD1, TDRD6, TDRD7 and DDX4. Interacts with RANBP9. Interacts with RANBP10. Interacts with PIWIL2 and MAEL. Interacts with BMAL1 and CLOCK. Interacts with Tex19.1 and, probably, Tex19.2. Interacts with RBM46. In terms of tissue distribution, testis-specific.

The protein localises to the cytoplasm. It localises to the perinuclear region. The catalysed reaction is ATP + H2O = ADP + phosphate + H(+). Functionally, ATP-dependent RNA helicase required during spermatogenesis to repress transposable elements and preventing their mobilization, which is essential for the germline integrity. Acts via the piRNA metabolic process, which mediates the repression of transposable elements during meiosis by forming complexes composed of piRNAs and Piwi proteins and governs the methylation and subsequent repression of transposons. Involved in the secondary piRNAs metabolic process, the production of piRNAs in fetal male germ cells through a ping-pong amplification cycle. Required for PIWIL2 slicing-triggered piRNA biogenesis: helicase activity enables utilization of one of the slice cleavage fragments generated by PIWIL2 and processing these pre-piRNAs into piRNAs. In Mus musculus (Mouse), this protein is ATP-dependent RNA helicase DDX4.